The chain runs to 137 residues: Holo-[acyl-carrier-protein] synthase (137 aa).

Mg(2+) contacts are provided by D8 and E58.

Belongs to the P-Pant transferase superfamily. AcpS family. Requires Mg(2+) as cofactor.

The protein localises to the cytoplasm. It carries out the reaction apo-[ACP] + CoA = holo-[ACP] + adenosine 3',5'-bisphosphate + H(+). In terms of biological role, transfers the 4'-phosphopantetheine moiety from coenzyme A to a Ser of acyl-carrier-protein. This Lactobacillus delbrueckii subsp. bulgaricus (strain ATCC 11842 / DSM 20081 / BCRC 10696 / JCM 1002 / NBRC 13953 / NCIMB 11778 / NCTC 12712 / WDCM 00102 / Lb 14) protein is Holo-[acyl-carrier-protein] synthase.